A 152-amino-acid chain; its full sequence is Small ribosomal subunit protein uS13 (152 aa).

The protein belongs to the universal ribosomal protein uS13 family.

It is found in the cytoplasm. In terms of biological role, located at the top of the head of the 40S subunit, it contacts several helices of the 18S rRNA. The protein is Small ribosomal subunit protein uS13 (RPS18) of Branchiostoma belcheri (Amphioxus).